Reading from the N-terminus, the 331-residue chain is Putative NAD(P)H nitroreductase acg (331 aa).

FMN contacts are provided by residues 28-32 (QPWRW) and arginine 316.

Belongs to the nitroreductase family. The cofactor is FMN.

The polypeptide is Putative NAD(P)H nitroreductase acg (acg) (Mycobacterium tuberculosis (strain CDC 1551 / Oshkosh)).